Reading from the N-terminus, the 151-residue chain is Brain ribonuclease (151 aa).

The tract at residues 1-25 is disordered; that stretch reads KESAAAKFRRQHMDAGSSSSGNSNY. Substrate-binding residues include Lys7 and Arg10. His12 (proton acceptor) is an active-site residue. Cystine bridges form between Cys26–Cys84, Cys40–Cys95, Cys58–Cys110, and Cys65–Cys72. Residue 41–45 coordinates substrate; it reads KPVNT. The N-linked (GlcNAc...) asparagine glycan is linked to Asn62. Residues Lys66 and Arg85 each contribute to the substrate site. His119 serves as the catalytic Proton donor. The O-linked (GalNAc...) threonine glycan is linked to Thr129. A glycan (O-linked (GalNAc...) serine) is linked at Ser133.

Belongs to the pancreatic ribonuclease family.

It is found in the secreted. This Axis porcinus (Hog deer) protein is Brain ribonuclease (BRN).